Consider the following 1088-residue polypeptide: RNA-directed RNA polymerase (1088 aa).

The RdRp catalytic domain maps to 501–687; the sequence is LSYGDVTRFL…AKRYIAGGKI (187 aa).

This sequence belongs to the reoviridae RNA-directed RNA polymerase family. Interacts with VP3 (Potential). Interacts with VP2; this interaction activates VP1. Interacts with NSP5; this interaction is probably necessary for the formation of functional virus factories. Interacts with NSP2; this interaction is weak. The cofactor is Mg(2+).

The protein resides in the virion. It catalyses the reaction RNA(n) + a ribonucleoside 5'-triphosphate = RNA(n+1) + diphosphate. Its function is as follows. RNA-directed RNA polymerase that is involved in both transcription and genome replication. Together with VP3 capping enzyme, forms an enzyme complex positioned near the channels situated at each of the five-fold vertices of the core. Following infection, the outermost layer of the virus is lost, leaving a double-layered particle (DLP) made up of the core and VP6 shell. VP1 then catalyzes the transcription of fully conservative plus-strand genomic RNAs that are extruded through the DLP's channels into the cytoplasm where they function as mRNAs for translation of viral proteins. One copy of each of the viral (+)RNAs is also recruited during core assembly, together with newly synthesized polymerase complexes and VP2. The polymerase of these novo-formed particles catalyzes the synthesis of complementary minus-strands leading to dsRNA formation. To do so, the polymerase specifically recognizes and binds 4 bases 5'-UGUG-3' in the conserved 3'-sequence of plus-strand RNA templates. VP2 presumably activates the autoinhibited VP1-RNA complex to coordinate packaging and genome replication. Once dsRNA synthesis is complete, the polymerase switches to the transcriptional mode, thus providing secondary transcription. In Rotavirus A (strain RVA/Human/Philippines/L26/1987/G12P1B[4]) (RV-A), this protein is RNA-directed RNA polymerase.